Reading from the N-terminus, the 231-residue chain is Cytidylate kinase (231 aa).

An ATP-binding site is contributed by 17–25 (GPTASGKGT).

Belongs to the cytidylate kinase family. Type 1 subfamily.

The protein localises to the cytoplasm. It carries out the reaction CMP + ATP = CDP + ADP. The enzyme catalyses dCMP + ATP = dCDP + ADP. This Ralstonia pickettii (strain 12J) protein is Cytidylate kinase.